The sequence spans 524 residues: FAD-dependent monooxygenase opdD (524 aa).

The FAD site is built by glutamate 48 and arginine 145.

This sequence belongs to the paxM FAD-dependent monooxygenase family.

The protein operates within secondary metabolite biosynthesis. Functionally, FAD-dependent monooxygenase; part of the gene cluster that mediates the biosynthesis of oxopyrrolidines, polyketide-amino acid hybrid compounds with feature structures of tetramic acid. Does not seem to play a role in oxopyrrolidines A and B biosynthesis. May be involved in further modifications of these oxopyrrolidines. In Penicillium oxalicum (strain 114-2 / CGMCC 5302) (Penicillium decumbens), this protein is FAD-dependent monooxygenase opdD.